Reading from the N-terminus, the 154-residue chain is Myoglobin (154 aa).

The Globin domain maps to 2 to 148; the sequence is GLSDQEWQQV…FRNDMASKYK (147 aa). Residue H65 participates in nitrite binding. Residue H65 participates in O2 binding. Position 94 (H94) interacts with heme b.

This sequence belongs to the globin family. In terms of assembly, monomeric.

It localises to the cytoplasm. It is found in the sarcoplasm. It carries out the reaction Fe(III)-heme b-[protein] + nitric oxide + H2O = Fe(II)-heme b-[protein] + nitrite + 2 H(+). The catalysed reaction is H2O2 + AH2 = A + 2 H2O. Monomeric heme protein which primary function is to store oxygen and facilitate its diffusion within muscle tissues. Reversibly binds oxygen through a pentacoordinated heme iron and enables its timely and efficient release as needed during periods of heightened demand. Depending on the oxidative conditions of tissues and cells, and in addition to its ability to bind oxygen, it also has a nitrite reductase activity whereby it regulates the production of bioactive nitric oxide. Under stress conditions, like hypoxia and anoxia, it also protects cells against reactive oxygen species thanks to its pseudoperoxidase activity. In Cerorhinca monocerata (Rhinoceros auklet), this protein is Myoglobin (MB).